The sequence spans 619 residues: Chaperone protein HscA homolog (619 aa).

The protein belongs to the heat shock protein 70 family.

Its function is as follows. Chaperone involved in the maturation of iron-sulfur cluster-containing proteins. Has a low intrinsic ATPase activity which is markedly stimulated by HscB. In Haemophilus influenzae (strain 86-028NP), this protein is Chaperone protein HscA homolog.